Reading from the N-terminus, the 1187-residue chain is DNA excision repair protein CSB (1187 aa).

Residues 31-43 (QATTDPADSSGPT) show a composition bias toward polar residues. Disordered regions lie at residues 31–53 (QATT…PDDA), 75–102 (IKGA…HHGA), 217–242 (KRVE…MEAS), and 265–351 (DSES…EGSD). 2 stretches are compositionally biased toward basic and acidic residues: residues 92 to 101 (KGKDQPDHHG) and 217 to 230 (KRVE…RQDD). The span at 300-319 (KRPRNKTKRPLPGKKWRKAN) shows a compositional bias: basic residues. Residues 339–351 (SDDDEDQVTEGSD) are compositionally biased toward acidic residues. Residues 384–580 (WELHCQRAGG…WSLFDFVFPG (197 aa)) enclose the Helicase ATP-binding domain. Residue 397–404 (DEMGLGKT) participates in ATP binding. The tract at residues 457–480 (SSSKKSKRSSDSDSEASWDSDQEE) is disordered. The span at 468 to 480 (SDSEASWDSDQEE) shows a compositional bias: acidic residues. The DEGH box motif lies at 531–534 (DEGH). A Helicase C-terminal domain is found at 716 to 876 (KVVEQVLKVW…RRFFKARDMK (161 aa)). 2 disordered regions span residues 916-945 (LYAA…HCPD) and 1095-1116 (GSAS…SSTR). The span at 918-933 (AASATPTTSGTEPSSS) shows a compositional bias: low complexity.

Belongs to the SNF2/RAD54 helicase family. As to quaternary structure, homodimer. Binds DNA. In terms of tissue distribution, expressed in proliferating tissues. Highly expressed in shoot apical meristem (SAM). Expressed in roots, young leaves, flag leaves, and panicles. Expressed at very low levels in mature leaves.

It is found in the nucleus. Functionally, essential factor involved in transcription-coupled nucleotide excision repair (TCR) which allows RNA polymerase II-blocking lesions to be rapidly removed from the transcribed strand of active genes. Upon DNA-binding, it locally modifies DNA conformation by wrapping the DNA around itself, thereby modifying the interface between stalled RNA polymerase II and DNA. It is required for transcription-coupled repair complex formation. The polypeptide is DNA excision repair protein CSB (Oryza sativa subsp. japonica (Rice)).